Here is a 417-residue protein sequence, read N- to C-terminus: Metal-binding activator 1 (417 aa).

The copper-fist DNA-binding region spans 1 to 40 (MIIFNGNKYACASCIRGHRSSTCRHSHRMLIKVRTRGRPS). Zn(2+) is bound by residues C11, C14, C23, and H25. Disordered regions lie at residues 128-198 (FLRK…IFTP) and 216-242 (YNSS…AAPH). S143 is subject to Phosphoserine. Positions 153–178 (SEKKERSRLQQEPIRHFSNCCKKDKS) are enriched in basic and acidic residues. 2 stretches are compositionally biased toward polar residues: residues 179-190 (QNPASNGKTNKA) and 228-238 (ETLTPQSTTTI). 2 tandem repeats follow at residues 264–279 (CSCE…CLIH) and 322–337 (CICP…CFSH). The segment at 264 to 337 (CSCEDESCPC…NCTCDGCFSH (74 aa)) is 2 X 16 AA repeat of C-X-C-X(4)-C-X-C-X-X-C-X-X-H.

It is found in the nucleus. Functionally, regulatory protein involved in Cu/Fe utilization and stress resistance. Involved in basal level transcription of FRE1 and H(2)O(2)-induced transcription of CTT1. Regulates the transcription of CTR1 and CTR3 via the copper ion responsive elements in their promoters. Required for degradation of CTR1. The sequence is that of Metal-binding activator 1 (MAC1) from Saccharomyces cerevisiae (strain ATCC 204508 / S288c) (Baker's yeast).